The following is a 274-amino-acid chain: Formamidopyrimidine-DNA glycosylase (274 aa).

The Schiff-base intermediate with DNA role is filled by Pro2. Glu3 (proton donor) is an active-site residue. Lys58 acts as the Proton donor; for beta-elimination activity in catalysis. DNA is bound by residues His91, Arg110, and Lys152. The FPG-type zinc finger occupies 237–271 (KVYGRKNLPCLVCENKIETVVIAGRHSAFCPHCQP). Arg261 (proton donor; for delta-elimination activity) is an active-site residue.

It belongs to the FPG family. As to quaternary structure, monomer. Zn(2+) serves as cofactor.

The enzyme catalyses Hydrolysis of DNA containing ring-opened 7-methylguanine residues, releasing 2,6-diamino-4-hydroxy-5-(N-methyl)formamidopyrimidine.. It carries out the reaction 2'-deoxyribonucleotide-(2'-deoxyribose 5'-phosphate)-2'-deoxyribonucleotide-DNA = a 3'-end 2'-deoxyribonucleotide-(2,3-dehydro-2,3-deoxyribose 5'-phosphate)-DNA + a 5'-end 5'-phospho-2'-deoxyribonucleoside-DNA + H(+). Involved in base excision repair of DNA damaged by oxidation or by mutagenic agents. Acts as a DNA glycosylase that recognizes and removes damaged bases. Has a preference for oxidized purines, such as 7,8-dihydro-8-oxoguanine (8-oxoG). Has AP (apurinic/apyrimidinic) lyase activity and introduces nicks in the DNA strand. Cleaves the DNA backbone by beta-delta elimination to generate a single-strand break at the site of the removed base with both 3'- and 5'-phosphates. This chain is Formamidopyrimidine-DNA glycosylase, found in Legionella pneumophila (strain Paris).